The chain runs to 359 residues: Chaperone protein DnaJ (359 aa).

In terms of domain architecture, J spans 3-68 (DYYEILGVPK…ERRQTYDRYG (66 aa)). The CR-type zinc finger occupies 128–205 (GVSKDIKYKI…CAGKGFIEEQ (78 aa)). C141, C144, C157, C160, C179, C182, C193, and C196 together coordinate Zn(2+). 4 CXXCXGXG motif repeats span residues 141–148 (CKTCDGTG), 157–164 (CPYCGGSG), 179–186 (CPFCKGSG), and 193–200 (CHDCAGKG).

Belongs to the DnaJ family. As to quaternary structure, homodimer. The cofactor is Zn(2+).

The protein resides in the cytoplasm. In terms of biological role, participates actively in the response to hyperosmotic and heat shock by preventing the aggregation of stress-denatured proteins and by disaggregating proteins, also in an autonomous, DnaK-independent fashion. Unfolded proteins bind initially to DnaJ; upon interaction with the DnaJ-bound protein, DnaK hydrolyzes its bound ATP, resulting in the formation of a stable complex. GrpE releases ADP from DnaK; ATP binding to DnaK triggers the release of the substrate protein, thus completing the reaction cycle. Several rounds of ATP-dependent interactions between DnaJ, DnaK and GrpE are required for fully efficient folding. Also involved, together with DnaK and GrpE, in the DNA replication of plasmids through activation of initiation proteins. The protein is Chaperone protein DnaJ of Campylobacter hominis (strain ATCC BAA-381 / DSM 21671 / CCUG 45161 / LMG 19568 / NCTC 13146 / CH001A).